Reading from the N-terminus, the 702-residue chain is Ribosomal RNA large subunit methyltransferase K/L (702 aa).

In terms of domain architecture, THUMP spans 43 to 154 (LIYQSLMWSR…KETAHISLDL (112 aa)).

The protein belongs to the methyltransferase superfamily. RlmKL family.

The protein resides in the cytoplasm. The enzyme catalyses guanosine(2445) in 23S rRNA + S-adenosyl-L-methionine = N(2)-methylguanosine(2445) in 23S rRNA + S-adenosyl-L-homocysteine + H(+). It catalyses the reaction guanosine(2069) in 23S rRNA + S-adenosyl-L-methionine = N(2)-methylguanosine(2069) in 23S rRNA + S-adenosyl-L-homocysteine + H(+). Its function is as follows. Specifically methylates the guanine in position 2445 (m2G2445) and the guanine in position 2069 (m7G2069) of 23S rRNA. The sequence is that of Ribosomal RNA large subunit methyltransferase K/L from Enterobacter sp. (strain 638).